Here is a 572-residue protein sequence, read N- to C-terminus: mRNA cap guanine-N(7) methyltransferase (572 aa).

Disordered stretches follow at residues Met-1–Val-75 and Glu-110–Ser-140. Composition is skewed to basic and acidic residues over residues Ala-24–Asp-39 and Ser-59–Asp-69. The span at Thr-123–Ser-140 shows a compositional bias: low complexity. An mRNA cap 0 methyltransferase domain is found at Ser-262–Val-571. Asn-271–Asn-272 contributes to the mRNA binding site. Residues Lys-275, Cys-302, Asp-324, Asp-366, Gln-396, and Tyr-401 each coordinate S-adenosyl-L-methionine.

Belongs to the class I-like SAM-binding methyltransferase superfamily. mRNA cap 0 methyltransferase family.

It localises to the nucleus. The catalysed reaction is a 5'-end (5'-triphosphoguanosine)-ribonucleoside in mRNA + S-adenosyl-L-methionine = a 5'-end (N(7)-methyl 5'-triphosphoguanosine)-ribonucleoside in mRNA + S-adenosyl-L-homocysteine. Responsible for methylating the 5'-cap structure of mRNAs. This Lodderomyces elongisporus (strain ATCC 11503 / CBS 2605 / JCM 1781 / NBRC 1676 / NRRL YB-4239) (Yeast) protein is mRNA cap guanine-N(7) methyltransferase (ABD1).